Here is a 221-residue protein sequence, read N- to C-terminus: Interleukin-12 subunit alpha (221 aa).

Positions 1–25 (MCPLRSLLLISTLVLLHHLPHLSLG) are cleaved as a signal peptide. 3 disulfide bridges follow: C39-C112, C66-C198, and C87-C125. N95 is a glycosylation site (N-linked (GlcNAc...) asparagine).

Belongs to the IL-6 superfamily. In terms of assembly, heterodimer with IL12B; disulfide-linked. This heterodimer is known as interleukin IL-12. Heterodimer with EBI3/IL27B; not disulfide-linked. This heterodimer is known as interleukin IL-35. Interacts with NBR1; this interaction promotes IL-12 secretion.

Its subcellular location is the secreted. Its function is as follows. Heterodimerizes with IL12B to form the IL-12 cytokine or with EBI3/IL27B to form the IL-35 cytokine. IL-12 is primarily produced by professional antigen-presenting cells (APCs) such as B-cells and dendritic cells (DCs) as well as macrophages and granulocytes and regulates T-cell and natural killer-cell responses, induces the production of interferon-gamma (IFN-gamma), favors the differentiation of T-helper 1 (Th1) cells and is an important link between innate resistance and adaptive immunity. Mechanistically, exerts its biological effects through a receptor composed of IL12R1 and IL12R2 subunits. Binding to the receptor results in the rapid tyrosine phosphorylation of a number of cellular substrates including the JAK family kinases TYK2 and JAK2. In turn, recruited STAT4 gets phosphorylated and translocates to the nucleus where it regulates cytokine/growth factor responsive genes. As part of IL-35, plays essential roles in maintaining the immune homeostasis of the liver microenvironment and also functions as an immune-suppressive cytokine. Mediates biological events through unconventional receptors composed of IL12RB2 and gp130/IL6ST heterodimers or homodimers. Signaling requires the transcription factors STAT1 and STAT4, which form a unique heterodimer that binds to distinct DNA sites. In Capra hircus (Goat), this protein is Interleukin-12 subunit alpha (IL12A).